A 616-amino-acid polypeptide reads, in one-letter code: MKNEIDIKKLRNIAIIAHVDHGKTTLVDKLLQQSGTFESARGDVDERVMDSNDLEKERGITILAKNTAINWNDYRINIVDTPGHADFGGEVERVLSMVDSVLLVVDAFDGPMPQTRFVTQKAFAHGLKPIVVINKVDRPGARPDWVVDQVFDLFVNLGASDEQLDFPIIYASALNGVAGLEHEDLAEDMTPLFEAIVKHVEPPKVELDAPFQMQISQLDYNNYVGVIGIGRIKRGSIKPNQPVTIINSEGKTRQGRIGQVLGHLGLQRYEEDVAYAGDIVAITGLGELNISDTICDINTVEALPSLTVDEPTVTMFFCVNTSPFAGQEGKYVTSRQILERLNKELVHNVALRVEETPNPDEFRVSGRGELHLSVLIENMRREGYELAVSRPKVIYRDIDGKKQEPYEQVTIDVEEQHQGSVMEALGIRKGEVRDMLPDGKGRVRLEYIIPSRGLIGFRGDFMTMTSGTGLLYSSFSHYDEIKGGEIGQRKNGVLISNATGKALGYALFGLQERGKLMIDANIEVYEGQIIGIHSRSNDLTVNCLQGKKLTNMRASGKDDAIVLTTPVKFSLEQAIEFIDDDELVEVTPESIRIRKKLLTENDRKRANRTTTSTSTH.

In terms of domain architecture, tr-type G spans 8–204 (KKLRNIAIIA…AIVKHVEPPK (197 aa)). Residues 20–25 (DHGKTT) and 134–137 (NKVD) contribute to the GTP site.

It belongs to the TRAFAC class translation factor GTPase superfamily. Classic translation factor GTPase family. BipA subfamily. In terms of assembly, monomer.

The protein localises to the cytoplasm. The enzyme catalyses GTP + H2O = GDP + phosphate + H(+). A 50S ribosomal subunit assembly protein with GTPase activity, required for 50S subunit assembly at low temperatures, may also play a role in translation. Binds GTP and analogs. Binds the 70S ribosome between the 30S and 50S subunits, in a similar position as ribosome-bound EF-G; it contacts a number of ribosomal proteins, both rRNAs and the A-site tRNA. This is Large ribosomal subunit assembly factor BipA from Haemophilus influenzae (strain ATCC 51907 / DSM 11121 / KW20 / Rd).